A 734-amino-acid chain; its full sequence is Ribosomal RNA large subunit methyltransferase K/L (734 aa).

Positions Q49–L167 constitute a THUMP domain.

The protein belongs to the methyltransferase superfamily. RlmKL family.

Its subcellular location is the cytoplasm. It carries out the reaction guanosine(2445) in 23S rRNA + S-adenosyl-L-methionine = N(2)-methylguanosine(2445) in 23S rRNA + S-adenosyl-L-homocysteine + H(+). It catalyses the reaction guanosine(2069) in 23S rRNA + S-adenosyl-L-methionine = N(2)-methylguanosine(2069) in 23S rRNA + S-adenosyl-L-homocysteine + H(+). Its function is as follows. Specifically methylates the guanine in position 2445 (m2G2445) and the guanine in position 2069 (m7G2069) of 23S rRNA. This is Ribosomal RNA large subunit methyltransferase K/L from Acinetobacter baylyi (strain ATCC 33305 / BD413 / ADP1).